The sequence spans 446 residues: Signal recognition particle protein (446 aa).

GTP-binding positions include 108–115 (GLQGAGKT), 191–195 (DTAGR), and 249–252 (TKLD).

It belongs to the GTP-binding SRP family. SRP54 subfamily. In terms of assembly, part of the signal recognition particle protein translocation system, which is composed of SRP and FtsY. Interacts with a small cytoplasmic RNA (sc-RNA).

Its subcellular location is the cytoplasm. The enzyme catalyses GTP + H2O = GDP + phosphate + H(+). Functionally, involved in targeting and insertion of nascent membrane proteins into the cytoplasmic membrane. Binds to the hydrophobic signal sequence of the ribosome-nascent chain (RNC) as it emerges from the ribosomes. The SRP-RNC complex is then targeted to the cytoplasmic membrane where it interacts with the SRP receptor FtsY. Interaction with FtsY leads to the transfer of the RNC complex to the Sec translocase for insertion into the membrane, the hydrolysis of GTP by both Ffh and FtsY, and the dissociation of the SRP-FtsY complex into the individual components. The chain is Signal recognition particle protein from Bacillus subtilis (strain 168).